The following is a 1035-amino-acid chain: Alpha-mannosidase B (1035 aa).

A signal peptide spans 1 to 20 (MGKVLILFLFVLLLITFINC). Residues N19 and N30 are each glycosylated (N-linked (GlcNAc...) asparagine). H47 and D49 together coordinate Zn(2+). N-linked (GlcNAc...) asparagine glycosylation is present at N63. A Zn(2+)-binding site is contributed by D161. The active-site Nucleophile is the D161. Residues N245, N250, N270, N309, N327, and N438 are each glycosylated (N-linked (GlcNAc...) asparagine). A Zn(2+)-binding site is contributed by H446. N-linked (GlcNAc...) asparagine glycans are attached at residues N487, N497, N503, N710, N719, N735, N792, N852, N863, N880, N962, and N993.

This sequence belongs to the glycosyl hydrolase 38 family. Zn(2+) serves as cofactor.

It is found in the secreted. The enzyme catalyses Hydrolysis of terminal, non-reducing alpha-D-mannose residues in alpha-D-mannosides.. The chain is Alpha-mannosidase B (manB) from Dictyostelium discoideum (Social amoeba).